The chain runs to 322 residues: Ribosomal RNA small subunit methyltransferase H (322 aa).

Residues 40–42, Asp-60, Phe-84, Asp-106, and Gln-113 contribute to the S-adenosyl-L-methionine site; that span reads GGH.

Belongs to the methyltransferase superfamily. RsmH family.

The protein resides in the cytoplasm. It catalyses the reaction cytidine(1402) in 16S rRNA + S-adenosyl-L-methionine = N(4)-methylcytidine(1402) in 16S rRNA + S-adenosyl-L-homocysteine + H(+). Its function is as follows. Specifically methylates the N4 position of cytidine in position 1402 (C1402) of 16S rRNA. In Aggregatibacter aphrophilus (strain NJ8700) (Haemophilus aphrophilus), this protein is Ribosomal RNA small subunit methyltransferase H.